The primary structure comprises 192 residues: uncharacterized protein (192 aa).

To M.thermoautotrophicum MTH863.

This is an uncharacterized protein from Methanocaldococcus jannaschii (strain ATCC 43067 / DSM 2661 / JAL-1 / JCM 10045 / NBRC 100440) (Methanococcus jannaschii).